Here is a 479-residue protein sequence, read N- to C-terminus: Aspartyl/glutamyl-tRNA(Asn/Gln) amidotransferase subunit B (479 aa).

The protein belongs to the GatB/GatE family. GatB subfamily. As to quaternary structure, heterotrimer of A, B and C subunits.

The catalysed reaction is L-glutamyl-tRNA(Gln) + L-glutamine + ATP + H2O = L-glutaminyl-tRNA(Gln) + L-glutamate + ADP + phosphate + H(+). It catalyses the reaction L-aspartyl-tRNA(Asn) + L-glutamine + ATP + H2O = L-asparaginyl-tRNA(Asn) + L-glutamate + ADP + phosphate + 2 H(+). In terms of biological role, allows the formation of correctly charged Asn-tRNA(Asn) or Gln-tRNA(Gln) through the transamidation of misacylated Asp-tRNA(Asn) or Glu-tRNA(Gln) in organisms which lack either or both of asparaginyl-tRNA or glutaminyl-tRNA synthetases. The reaction takes place in the presence of glutamine and ATP through an activated phospho-Asp-tRNA(Asn) or phospho-Glu-tRNA(Gln). The sequence is that of Aspartyl/glutamyl-tRNA(Asn/Gln) amidotransferase subunit B from Deinococcus radiodurans (strain ATCC 13939 / DSM 20539 / JCM 16871 / CCUG 27074 / LMG 4051 / NBRC 15346 / NCIMB 9279 / VKM B-1422 / R1).